The primary structure comprises 767 residues: DNA topoisomerase 1 (767 aa).

A compositionally biased stretch (basic and acidic residues) spans 1 to 23; it reads MSGDHLHNDSQIEADFRLNDSHK. The disordered stretch occupies residues 1–201; sequence MSGDHLHNDS…NKKKKPKKEE (201 aa). Ser2 is modified (N-acetylserine). A phosphoserine mark is found at Ser2 and Ser10. Residues 24–39 are compositionally biased toward basic residues; sequence HKDKHKDREHRHKEHK. Positions 40 to 110 are enriched in basic and acidic residues; that stretch reads KDKEKDREKS…DAKIKKEKEN (71 aa). At Ser59 the chain carries Phosphoserine. Lys103 participates in a covalent cross-link: Glycyl lysine isopeptide (Lys-Gly) (interchain with G-Cter in SUMO2). Lys105 participates in a covalent cross-link: Glycyl lysine isopeptide (Lys-Gly) (interchain with G-Cter in SUMO); alternate. A Glycyl lysine isopeptide (Lys-Gly) (interchain with G-Cter in SUMO2); alternate cross-link involves residue Lys105. A Phosphoserine modification is found at Ser114. Residue Lys119 forms a Glycyl lysine isopeptide (Lys-Gly) (interchain with G-Cter in SUMO); alternate linkage. Residue Lys119 forms a Glycyl lysine isopeptide (Lys-Gly) (interchain with G-Cter in SUMO2); alternate linkage. Lys119 participates in a covalent cross-link: Glycyl lysine isopeptide (Lys-Gly) (interchain with G-Cter in SUMO1); alternate. The segment covering 131-168 has biased composition (basic and acidic residues); the sequence is PKEDIKPLKRPRDEDDADYKPKKIKTEDIKKEKKRKLE. Residues Lys136 and Lys150 each participate in a glycyl lysine isopeptide (Lys-Gly) (interchain with G-Cter in SUMO2) cross-link. A Glycyl lysine isopeptide (Lys-Gly) (interchain with G-Cter in SUMO); alternate cross-link involves residue Lys155. Lys155 is covalently cross-linked (Glycyl lysine isopeptide (Lys-Gly) (interchain with G-Cter in SUMO2); alternate). Residues Lys160 and Lys166 each participate in a glycyl lysine isopeptide (Lys-Gly) (interchain with G-Cter in SUMO2) cross-link. Residue Lys174 forms a Glycyl lysine isopeptide (Lys-Gly) (interchain with G-Cter in SUMO2); alternate linkage. N6-acetyllysine; alternate is present on Lys174. Residues 181-201 are compositionally biased toward basic and acidic residues; that stretch reads KDKDKKVPEPDNKKKKPKKEE. Lys206 is covalently cross-linked (Glycyl lysine isopeptide (Lys-Gly) (interchain with G-Cter in SUMO2)). Lys282 bears the N6-acetyllysine mark. Lys338 participates in a covalent cross-link: Glycyl lysine isopeptide (Lys-Gly) (interchain with G-Cter in SUMO2). Interaction with DNA regions lie at residues 427-428 and 490-495; these read KY and RAGNEK. In terms of domain architecture, Topo IB-type catalytic spans 434–767; the sequence is SSRIKGEKDW…IDMADEDYEF (334 aa). Ser508 carries the phosphoserine; by CK2 modification. Lys551 is covalently cross-linked (Glycyl lysine isopeptide (Lys-Gly) (interchain with G-Cter in SUMO2)). The tract at residues 587–589 is interaction with DNA; that stretch reads TAK. Residues Lys644, Lys702, and Lys714 each participate in a glycyl lysine isopeptide (Lys-Gly) (interchain with G-Cter in SUMO2) cross-link. The active-site O-(3'-phospho-DNA)-tyrosine intermediate is the Tyr725.

The protein belongs to the type IB topoisomerase family. In terms of assembly, monomer. Interacts with ERCC6. Interacts with TPRN; TPRN interacts with a number of DNA damage response proteins, is recruited to sites of DNA damage and may play a role in DNA damage repair. Post-translationally, sumoylated. Lys-119 is the main site of sumoylation. Sumoylation plays a role in partitioning TOP1 between nucleoli and nucleoplasm. Levels are dramatically increased on camptothecin (CPT) treatment. Phosphorylation at Ser-508 by CK2 increases binding to supercoiled DNA and sensitivity to camptothecin.

The protein resides in the nucleus. It is found in the nucleolus. It localises to the nucleoplasm. It catalyses the reaction ATP-independent breakage of single-stranded DNA, followed by passage and rejoining.. Its activity is regulated as follows. Specifically inhibited by camptothecin (CPT), a plant alkaloid with antitumor activity. In terms of biological role, releases the supercoiling and torsional tension of DNA introduced during the DNA replication and transcription by transiently cleaving and rejoining one strand of the DNA duplex. Introduces a single-strand break via transesterification at a target site in duplex DNA. The scissile phosphodiester is attacked by the catalytic tyrosine of the enzyme, resulting in the formation of a DNA-(3'-phosphotyrosyl)-enzyme intermediate and the expulsion of a 5'-OH DNA strand. The free DNA strand then rotates around the intact phosphodiester bond on the opposing strand, thus removing DNA supercoils. Finally, in the religation step, the DNA 5'-OH attacks the covalent intermediate to expel the active-site tyrosine and restore the DNA phosphodiester backbone. Regulates the alternative splicing of tissue factor (F3) pre-mRNA in endothelial cells. Involved in the circadian transcription of the core circadian clock component BMAL1 by altering the chromatin structure around the ROR response elements (ROREs) on the BMAL1 promoter. The sequence is that of DNA topoisomerase 1 (TOP1) from Chlorocebus aethiops (Green monkey).